Reading from the N-terminus, the 291-residue chain is Trimeric intracellular cation channel type B (291 aa).

The Lumenal portion of the chain corresponds to 1 to 19; that stretch reads MDSPWDELALAFSRTSMFP. Residues 20–33 form a helical membrane-spanning segment; it reads FFDIAHYLVSVMAV. At 34-50 the chain is on the cytoplasmic side; that stretch reads KRQPGAAALAWKNPISS. Residues 51–70 traverse the membrane as a helical segment; sequence WFTAMLHCFGGGILSCLLLA. At 71-82 the chain is on the lumenal side; that stretch reads EPPLKFLANHTN. Residues 83–99 form a helical membrane-spanning segment; sequence ILLASSIWYITFFCPHD. Topologically, residues 100-104 are cytoplasmic; sequence LVSQG. A helical membrane pass occupies residues 105–121; that stretch reads YSYLPVQLLASGMKEVT. Residues Lys118 and Arg122 each coordinate a 1,2-diacyl-sn-glycero-3-phospho-(1D-myo-inositol-4,5-bisphosphate). The Lumenal portion of the chain corresponds to 122 to 139; that stretch reads RTWKIVGGVTHANSYYKN. The chain crosses the membrane as a helical span at residues 140 to 156; sequence GWIVMIAIGWARGAGGT. Residues 157–179 lie on the Cytoplasmic side of the membrane; that stretch reads IITNFERLVKGDWKPEGDEWLKM. Residues 180–195 form a helical membrane-spanning segment; sequence SYPAKVTLLGSVIFTF. At 196-207 the chain is on the lumenal side; that stretch reads QHTQHLAISKHN. The helical transmembrane segment at 208–227 threads the bilayer; the sequence is LMFLYTIFIVATKITMMTTQ. Residues 228–291 are Cytoplasmic-facing; the sequence is TSTMTFAPFE…VKKKHTKKNE (64 aa). Positions 256 to 291 are disordered; it reads KKSEAKSPSNGVGSLASKPVDVASDNVKKKHTKKNE. Ser262 is modified (phosphoserine).

This sequence belongs to the TMEM38 family. In terms of assembly, homotrimer; conformation seems to be controled by binding to diacylglycerol (DAG).

It localises to the endoplasmic reticulum membrane. It catalyses the reaction K(+)(in) = K(+)(out). Its activity is regulated as follows. Channel activity is activated by increased cytosolic Ca(2+) levels and blocked by luminal high Ca(2+) levels. In terms of biological role, intracellular monovalent cation channel required for maintenance of rapid intracellular calcium release. Acts as a potassium counter-ion channel that functions in synchronization with calcium release from intracellular stores. Activated by increased cytosolic Ca(2+) levels. The chain is Trimeric intracellular cation channel type B from Homo sapiens (Human).